The sequence spans 367 residues: MMKRFGKTLLALTLAGSVAGMAQAADNKVLHVYNWSDYIAPDTLEKFTKETGIKVVYDVYDSNEVLEAKLLAGKSGYDVVVPSNSFLAKQIKAGVYQKLDKSKLPNWKNLNKDLMHTLEVSDPGNEHAIPYMWGTIGIGYNPDKVKAAFGDNAPVDSWDLVFKPENIQKLKQCGVSFLDSPTEILPAALHYLGYKPDTDNPKELKAAEELFLKIRPYVTYFHSSKYISDLANGNICVAIGYSGDIYQAKSRAEEAKNKVTVKYNIPKEGAGSFFDMVAIPKDAENTEGALAFVNFLMKPEIMAEITDVVQFPNGNAAATPLVSEAIRNDPGIYPSEEVMKKLYTFPDLPAKTQRAMTRSWTKIKSGK.

The signal sequence occupies residues 1-24; sequence MMKRFGKTLLALTLAGSVAGMAQA. 36–37 contributes to the putrescine binding site; it reads SD. Cys173 and Cys236 are joined by a disulfide. The putrescine site is built by Asp244 and Asp275.

It belongs to the bacterial solute-binding protein PotD/PotF family.

It is found in the periplasm. Its subcellular location is the secreted. Functionally, putrescine-binding protein probably required for putrescine uptake into cells. Binds putrescine with high affinity, spermidine with relatively low affinity. Does not bind cadaverine or spermine. Putrescine binding induces large inter-domain conformational changes. In Pseudomonas aeruginosa (strain UCBPP-PA14), this protein is Putrescine-binding periplasmic protein SpuD (spuD).